We begin with the raw amino-acid sequence, 400 residues long: Enoyl-[acyl-carrier-protein] reductase [NADH] (400 aa).

Residues 48–53, 74–75, 111–112, and 139–140 contribute to the NAD(+) site; these read GASTGY, FE, DA, and LA. Tyrosine 225 is a binding site for substrate. Tyrosine 235 functions as the Proton donor in the catalytic mechanism. Residues lysine 244 and 273-275 each bind NAD(+); that span reads VVT.

Belongs to the TER reductase family. Monomer.

The catalysed reaction is a 2,3-saturated acyl-[ACP] + NAD(+) = a (2E)-enoyl-[ACP] + NADH + H(+). It participates in lipid metabolism; fatty acid biosynthesis. In terms of biological role, involved in the final reduction of the elongation cycle of fatty acid synthesis (FAS II). Catalyzes the reduction of a carbon-carbon double bond in an enoyl moiety that is covalently linked to an acyl carrier protein (ACP). This is Enoyl-[acyl-carrier-protein] reductase [NADH] from Burkholderia ambifaria (strain MC40-6).